A 663-amino-acid polypeptide reads, in one-letter code: Polyunsaturated fatty acid lipoxygenase ALOX15 (663 aa).

The PLAT domain occupies 2 to 115 (GVYRIRVSTG…ILSLPEGTGC (114 aa)). The region spanning 116-663 (TVVEDSQGLF…PSMVENSVAI (548 aa)) is the Lipoxygenase domain. Ser-149 is subject to Phosphoserine. The Fe cation site is built by His-361, His-366, His-541, His-545, and Ile-663.

Belongs to the lipoxygenase family. In terms of assembly, interacts with PEBP1; in response to IL13/interleukin-13, prevents the interaction of PEBP1 with RAF1 to activate the ERK signaling cascade. The cofactor is Fe cation. As to expression, detected in leukocytes, lung and aorta.

The protein resides in the cytoplasm. Its subcellular location is the cytosol. It localises to the cell membrane. The protein localises to the lipid droplet. The catalysed reaction is (5Z,8Z,11Z,14Z)-eicosatetraenoate + O2 = (12S)-hydroperoxy-(5Z,8Z,10E,14Z)-eicosatetraenoate. It catalyses the reaction (5Z,8Z,11Z,14Z)-eicosatetraenoate + O2 = (15S)-hydroperoxy-(5Z,8Z,11Z,13E)-eicosatetraenoate. It carries out the reaction (9Z,12Z)-octadecadienoate + O2 = (13S)-hydroperoxy-(9Z,11E)-octadecadienoate. The enzyme catalyses (12S)-hydroperoxy-(5Z,8Z,10E,14Z)-eicosatetraenoate = (8S)-hydroxy-(11S,12S)-epoxy-(5Z,9E,14Z)-eicosatrienoate. The catalysed reaction is (5Z,8Z,11Z,14Z)-eicosatetraenoate + 2 O2 = (14R,15S)-dihydroperoxy-(5Z,8Z,10E,12E)-eicosatetraenoate. It catalyses the reaction (5Z,8Z,11Z,14Z)-eicosatetraenoate + 2 O2 = (8S,15S)-dihydroperoxy-(5Z,9E,11Z,13E)-eicosatetraenoate. It carries out the reaction (14S,15R)-epoxy-(5Z,8Z,11Z)-eicosatrienoate + O2 = (8S)-hydroperoxy-(14S,15R)-epoxy-(5Z,9E,11Z)-eicosatrienoate. The enzyme catalyses (14S,15R)-epoxy-(5Z,8Z,11Z)-eicosatrienoate + O2 = (12S)-hydroperoxy-(14S,15R)-epoxy-(5Z,8Z,10E)-eicosatrienoate. The catalysed reaction is (14R,15S)-epoxy-(5Z,8Z,11Z)-eicosatrienoate + O2 = (5S)-hydroperoxy-(14R,15S)-epoxy-(6E,8Z,11Z)-eicosatrienoate. It catalyses the reaction (14R,15S)-epoxy-(5Z,8Z,11Z)-eicosatrienoate + O2 = (12S)-hydroperoxy-(14R,15S)-epoxy-(5Z,8Z,10E)-eicosatrienoate. It carries out the reaction (15R)-hydroperoxy-(5Z,8Z,11Z,13E)-eicosatetraenoate = 15-oxo-(5Z,8Z,11Z,13E)-eicosatetraenoate + H2O. The enzyme catalyses (15S)-hydroperoxy-(5Z,8Z,11Z,13E)-eicosatetraenoate = (14S,15S)-epoxy-(5Z,8Z,10E,12E)-eicosatetraenoate + H2O. The catalysed reaction is (4Z,7Z,10Z,13Z,16Z)-docosapentaenoate + O2 = 14-hydroperoxy-(4Z,7Z,10Z,12E,16Z)-docosapentaenoate. It catalyses the reaction (7Z,10Z,13Z,16Z,19Z)-docosapentaenoate + O2 = 14-hydroperoxy-(7Z,10Z,12E,16Z,19Z)-docosapentaenoate. It carries out the reaction (4Z,7Z,10Z,13Z,16Z,19Z)-docosahexaenoate + O2 = (14S)-hydroperoxy-(4Z,7Z,10Z,12E,16Z,19Z)-docosahexaenoate. The enzyme catalyses (4Z,7Z,10Z,13Z,16Z,19Z)-docosahexaenoate + O2 = (17S)-hydroperoxy-(4Z,7Z,10Z,13Z,15E,19Z)-docosahexaenoate. The catalysed reaction is (7S)-hydroperoxy-(4Z,8E,10Z,13Z,16Z,19Z)-docosahexaenoate + O2 = (7S,14S)-dihydroperoxy-(4Z,8E,10Z,12E,16Z,19Z)-docosahexaenoate. It catalyses the reaction (7S)-hydroperoxy-(4Z,8E,10Z,13Z,16Z,19Z)-docosahexaenoate + O2 = (7S,17S)-dihydroperoxy-(4Z,8E,10Z,13Z,15E,19Z)-docosahexaenoate. It carries out the reaction (4Z,7Z,10Z,13Z,16Z,19Z)-docosahexaenoate + O2 = (11S)-hydroperoxy-(4Z,7Z,9E,13Z,16Z,19Z)-docosahexaenoate. The enzyme catalyses N-(5Z,8Z,11Z,14Z)-eicosatetraenoyl-taurine + O2 = N-(12S)-hydroperoxy-(5Z,8Z,10E,14Z)-eicosatetraenoyl-taurine. The catalysed reaction is N-(5Z,8Z,11Z,14Z)-eicosatetraenoyl-gamma-aminobutanoate + O2 = N-(12S)-hydroperoxy-(5Z,8Z,10E,14Z)-eicosatetraenoyl-gamma-aminobutanoate. It catalyses the reaction N-(5Z,8Z,11Z,14Z)-eicosatetraenoyl-glycine + O2 = N-(12S)-hydroperoxy-(5Z,8Z,10E,14Z)-eicosatetraenoyl-glycine. It carries out the reaction N-(5Z,8Z,11Z,14Z)-eicosatetraenoyl-L-alanine + O2 = N-(12S)-hydroperoxy-(5Z,8Z,10E,14Z)-eicosatetraenoyl-alanine. The enzyme catalyses N-(5Z,8Z,11Z,14Z)-eicosatetraenoyl-taurine + O2 = N-(15S)-hydroperoxy-(5Z,8Z,11Z,13E)-eicosatetraenoyl-taurine. The catalysed reaction is N-(5Z,8Z,11Z,14Z)-eicosatetraenoyl-gamma-aminobutanoate + O2 = N-(15S)-hydroperoxy-(5Z,8Z,11Z,13E)-eicosatetraenoyl-gamma-aminobutanoate. It catalyses the reaction N-(5Z,8Z,11Z,14Z)-eicosatetraenoyl-glycine + O2 = N-(15S)-hydroperoxy-(5Z,8Z,11Z,13E)-eicosatetraenoyl-glycine. It carries out the reaction N-(5Z,8Z,11Z,14Z)-eicosatetraenoyl-L-alanine + O2 = N-(15S)-hydroperoxy-(5Z,8Z,11Z,13E)-eicosatetraenoyl-alanine. It participates in lipid metabolism; hydroperoxy eicosatetraenoic acid biosynthesis. Its function is as follows. Non-heme iron-containing dioxygenase that catalyzes the stereo-specific peroxidation of free and esterified polyunsaturated fatty acids generating a spectrum of bioactive lipid mediators. It inserts peroxyl groups at C12 or C15 of arachidonate ((5Z,8Z,11Z,14Z)-eicosatetraenoate) producing both 12-hydroperoxyeicosatetraenoate/12-HPETE and 15-hydroperoxyeicosatetraenoate/15-HPETE. It may then act on 12-HPETE to produce hepoxilins, which may show pro-inflammatory properties. Can also peroxidize linoleate ((9Z,12Z)-octadecadienoate) to 13-hydroperoxyoctadecadienoate. May participate in the sequential oxidations of DHA ((4Z,7Z,10Z,13Z,16Z,19Z)-docosahexaenoate) to generate specialized pro-resolving mediators (SPMs)like resolvin D5 ((7S,17S)-diHPDHA) and (7S,14S)-diHPDHA, that actively down-regulate the immune response and have anti-aggregation properties with platelets. Can convert epoxy fatty acids to hydroperoxy-epoxides derivatives followed by an intramolecular nucleophilic substitution leading to the formation of monocyclic endoperoxides. Plays an important role during the maintenance of self-tolerance by peroxidizing membrane-bound phosphatidylethanolamine which can then signal the sorting process for clearance of apoptotic cells during inflammation and prevent an autoimmune response. In addition to its role in the immune and inflammatory responses, this enzyme may play a role in epithelial wound healing in the cornea through production of lipoxin A4 (LXA(4)) and docosahexaenoic acid-derived neuroprotectin D1 (NPD1; 10R,17S-HDHA), both lipid autacoids exhibit anti-inflammatory and neuroprotective properties. Furthermore, it may regulate actin polymerization which is crucial for several biological processes such as the phagocytosis of apoptotic cells. It is also implicated in the generation of endogenous ligands for peroxisome proliferator activated receptor (PPAR-gamma), hence modulating macrophage development and function. It may also exert a negative effect on skeletal development by regulating bone mass through this pathway. As well as participates in ER stress and downstream inflammation in adipocytes, pancreatic islets, and liver. Finally, it is also involved in the cellular response to IL13/interleukin-13. The sequence is that of Polyunsaturated fatty acid lipoxygenase ALOX15 from Rattus norvegicus (Rat).